Reading from the N-terminus, the 258-residue chain is MPKTLTEKLNAIKAAGKGIFVPYIMAGDHEKGLDGLAETIHFLEDLGVSAIEVGIPFSDPVADGPVIEEAGLRSLAHGTSTQALVETLKTIETEIPLVIMTYFNPLFQYGVENFVKDLADTAVKGLIIPDLPHEHANFVEPFLADTDIALIPLVSLTTGIERQKELIEGAEGFIYAVAINGVTGKSGNYRADLDKHLAQLHQVADIPVLTGFGVSSQADLERFNAVSDGVIVGSKIVKALHQGEPIQDFIKQAVAYQK.

Residues Glu52 and Asp63 each act as proton acceptor in the active site.

Belongs to the TrpA family. Tetramer of two alpha and two beta chains.

It carries out the reaction (1S,2R)-1-C-(indol-3-yl)glycerol 3-phosphate + L-serine = D-glyceraldehyde 3-phosphate + L-tryptophan + H2O. It functions in the pathway amino-acid biosynthesis; L-tryptophan biosynthesis; L-tryptophan from chorismate: step 5/5. The alpha subunit is responsible for the aldol cleavage of indoleglycerol phosphate to indole and glyceraldehyde 3-phosphate. This is Tryptophan synthase alpha chain from Streptococcus pneumoniae (strain ATCC 700669 / Spain 23F-1).